Consider the following 143-residue polypeptide: MALERTFSIVKPDAVAKNHIGAIYNRFETAGLKIVAAKMVHLSQEKAEGFYAEHSERPFFGALVSFMTSGPVMVTVLEGENAVLKNREIMGATNPADALAGTLRADYADSIDENAVHGSDAVESAAREIAYFFADEELCSRTR.

ATP is bound by residues Lys-11, Phe-59, Arg-87, Thr-93, Arg-104, and Asn-114. Residue His-117 is the Pros-phosphohistidine intermediate of the active site.

The protein belongs to the NDK family. Homotetramer. Requires Mg(2+) as cofactor.

The protein resides in the cytoplasm. The catalysed reaction is a 2'-deoxyribonucleoside 5'-diphosphate + ATP = a 2'-deoxyribonucleoside 5'-triphosphate + ADP. It carries out the reaction a ribonucleoside 5'-diphosphate + ATP = a ribonucleoside 5'-triphosphate + ADP. Functionally, major role in the synthesis of nucleoside triphosphates other than ATP. The ATP gamma phosphate is transferred to the NDP beta phosphate via a ping-pong mechanism, using a phosphorylated active-site intermediate. The sequence is that of Nucleoside diphosphate kinase from Pseudoalteromonas translucida (strain TAC 125).